The following is a 255-amino-acid chain: Taurine import ATP-binding protein TauB (255 aa).

The 228-residue stretch at 2–229 folds into the ABC transporter domain; sequence LNVSGLWAEY…RYAEGEPCRA (228 aa). Residue 34-41 coordinates ATP; sequence GPSGCGKT.

The protein belongs to the ABC transporter superfamily. Taurine importer (TC 3.A.1.17.1) family. The complex is composed of two ATP-binding proteins (TauB), two transmembrane proteins (TauC) and a solute-binding protein (TauA).

The protein localises to the cell inner membrane. The enzyme catalyses taurine(out) + ATP + H2O = taurine(in) + ADP + phosphate + H(+). In terms of biological role, part of the ABC transporter complex TauABC involved in taurine import. Responsible for energy coupling to the transport system. The polypeptide is Taurine import ATP-binding protein TauB (Yersinia pestis bv. Antiqua (strain Antiqua)).